The following is a 1913-amino-acid chain: GREB1-like protein (1913 aa).

Residues 86–96 are compositionally biased toward acidic residues; the sequence is MEDDEDEEEMS. Disordered regions lie at residues 86–111, 281–309, 1097–1157, and 1179–1207; these read MEDD…KPAP, NGTS…SPRP, EAER…TSSI, and DSLD…LAWS. Residues 289–301 show a composition bias toward low complexity; it reads KSSSCSSTPSRPG. Residues 1118-1157 show a composition bias toward polar residues; it reads PQSNSSAVTGTSGSIMENGVSSSSTAGKPQQQLLTPTSSI. Low complexity predominate over residues 1187–1200; it reads SSTTSKPSSSSSSS. Residues 1832–1852 form a helical membrane-spanning segment; the sequence is GVFFSGLLLYLCDSFVGADLL.

Belongs to the GREB1 family. In terms of tissue distribution, expressed in the inner ear, with a high presence in the spiral ganglia, cochlear nerve bundles, and hair cells.

It localises to the membrane. Plays a major role in early metanephros and genital development. The polypeptide is GREB1-like protein (Greb1l) (Mus musculus (Mouse)).